Here is a 469-residue protein sequence, read N- to C-terminus: Aspartyl/glutamyl-tRNA(Asn/Gln) amidotransferase subunit B (469 aa).

The protein belongs to the GatB/GatE family. GatB subfamily. As to quaternary structure, heterotrimer of A, B and C subunits.

It catalyses the reaction L-glutamyl-tRNA(Gln) + L-glutamine + ATP + H2O = L-glutaminyl-tRNA(Gln) + L-glutamate + ADP + phosphate + H(+). The catalysed reaction is L-aspartyl-tRNA(Asn) + L-glutamine + ATP + H2O = L-asparaginyl-tRNA(Asn) + L-glutamate + ADP + phosphate + 2 H(+). Functionally, allows the formation of correctly charged Asn-tRNA(Asn) or Gln-tRNA(Gln) through the transamidation of misacylated Asp-tRNA(Asn) or Glu-tRNA(Gln) in organisms which lack either or both of asparaginyl-tRNA or glutaminyl-tRNA synthetases. The reaction takes place in the presence of glutamine and ATP through an activated phospho-Asp-tRNA(Asn) or phospho-Glu-tRNA(Gln). The protein is Aspartyl/glutamyl-tRNA(Asn/Gln) amidotransferase subunit B of Methanococcus maripaludis (strain C5 / ATCC BAA-1333).